The following is a 102-amino-acid chain: Cuticle protein 10.9 (102 aa).

The residue at position 1 (glutamine 1) is a Pyrrolidone carboxylic acid. The disordered stretch occupies residues 1–45 (QLAEQYPPHPYSFSYDATDETGARISTSESGDESNSKTGSYSYQT). The Chitin-binding type R&amp;R domain occupies 8 to 74 (PHPYSFSYDA…SIDTNEPGTK (67 aa)). Over residues 36–45 (SKTGSYSYQT) the composition is skewed to polar residues.

Functionally, component of the cuticle of the tick. Binds chitin. This chain is Cuticle protein 10.9, found in Ixodes ricinus (Common tick).